A 799-amino-acid polypeptide reads, in one-letter code: Phenylalanine--tRNA ligase beta subunit (799 aa).

Residues Lys-40–Arg-147 form the tRNA-binding domain. One can recognise a B5 domain in the interval Ser-402 to Thr-479. Asp-457, Asp-463, Glu-466, and Glu-467 together coordinate Mg(2+). The region spanning Ser-707 to Arg-799 is the FDX-ACB domain.

This sequence belongs to the phenylalanyl-tRNA synthetase beta subunit family. Type 1 subfamily. In terms of assembly, tetramer of two alpha and two beta subunits. Mg(2+) is required as a cofactor.

The protein localises to the cytoplasm. The enzyme catalyses tRNA(Phe) + L-phenylalanine + ATP = L-phenylalanyl-tRNA(Phe) + AMP + diphosphate + H(+). This chain is Phenylalanine--tRNA ligase beta subunit, found in Leptospira biflexa serovar Patoc (strain Patoc 1 / Ames).